The following is a 425-amino-acid chain: UDP-N-acetylglucosamine 1-carboxyvinyltransferase (425 aa).

Lys23 to Asn24 contacts phosphoenolpyruvate. Position 100 (Arg100) interacts with UDP-N-acetyl-alpha-D-glucosamine. Cys124 serves as the catalytic Proton donor. At Cys124 the chain carries 2-(S-cysteinyl)pyruvic acid O-phosphothioketal. UDP-N-acetyl-alpha-D-glucosamine is bound by residues Lys169–Val172, Asp313, and Val335.

Belongs to the EPSP synthase family. MurA subfamily.

Its subcellular location is the cytoplasm. The catalysed reaction is phosphoenolpyruvate + UDP-N-acetyl-alpha-D-glucosamine = UDP-N-acetyl-3-O-(1-carboxyvinyl)-alpha-D-glucosamine + phosphate. Its pathway is cell wall biogenesis; peptidoglycan biosynthesis. Cell wall formation. Adds enolpyruvyl to UDP-N-acetylglucosamine. The polypeptide is UDP-N-acetylglucosamine 1-carboxyvinyltransferase (Wolbachia pipientis subsp. Culex pipiens (strain wPip)).